Here is a 443-residue protein sequence, read N- to C-terminus: Tol-Pal system protein TolB (443 aa).

The first 31 residues, 1–31 (MMIMTTRTFFSWFIVICAFWLTSFSSVPVHA), serve as a signal peptide directing secretion. The disordered stretch occupies residues 422–443 (ERQLPTPNDASDPAWSPLLNIQ).

It belongs to the TolB family. As to quaternary structure, the Tol-Pal system is composed of five core proteins: the inner membrane proteins TolA, TolQ and TolR, the periplasmic protein TolB and the outer membrane protein Pal. They form a network linking the inner and outer membranes and the peptidoglycan layer.

It localises to the periplasm. Its function is as follows. Part of the Tol-Pal system, which plays a role in outer membrane invagination during cell division and is important for maintaining outer membrane integrity. The protein is Tol-Pal system protein TolB of Bartonella henselae (strain ATCC 49882 / DSM 28221 / CCUG 30454 / Houston 1) (Rochalimaea henselae).